The sequence spans 333 residues: Adenosine deaminase (333 aa).

Zn(2+)-binding residues include H12 and H14. Residues H14, D16, and G170 each coordinate substrate. H197 is a Zn(2+) binding site. The active-site Proton donor is the E200. D278 is a Zn(2+) binding site. D279 provides a ligand contact to substrate.

This sequence belongs to the metallo-dependent hydrolases superfamily. Adenosine and AMP deaminases family. Adenosine deaminase subfamily. It depends on Zn(2+) as a cofactor.

It carries out the reaction adenosine + H2O + H(+) = inosine + NH4(+). It catalyses the reaction 2'-deoxyadenosine + H2O + H(+) = 2'-deoxyinosine + NH4(+). Its function is as follows. Catalyzes the hydrolytic deamination of adenosine and 2-deoxyadenosine. This chain is Adenosine deaminase, found in Shigella flexneri serotype 5b (strain 8401).